The following is an 864-amino-acid chain: DNA mismatch repair protein MutS (864 aa).

Position 613-620 (613-620) interacts with ATP; it reads GPNMGGKS.

It belongs to the DNA mismatch repair MutS family.

Its function is as follows. This protein is involved in the repair of mismatches in DNA. It is possible that it carries out the mismatch recognition step. This protein has a weak ATPase activity. In Actinobacillus pleuropneumoniae serotype 3 (strain JL03), this protein is DNA mismatch repair protein MutS.